Consider the following 413-residue polypeptide: Phosphatidylcholine-sterol acyltransferase (413 aa).

An N-terminal signal peptide occupies residues 1 to 22 (GRTGAGFTLLTLLLLLPQPTSQ). Cys72 and Cys96 are oxidised to a cystine. N-linked (GlcNAc...) asparagine glycosylation occurs at Asn106. Residue Ser203 is the Charge relay system of the active site. Ser203 serves as the catalytic Nucleophile. The N-linked (GlcNAc...) asparagine glycan is linked to Asn294. Cys335 and Cys378 form a disulfide bridge. Residues Asp367 and His399 each act as charge relay system in the active site. An N-linked (GlcNAc...) asparagine glycan is attached at Asn406.

The protein belongs to the AB hydrolase superfamily. Lipase family. Detected in blood plasma (at protein level). Expressed in liver, brain and adrenal glands. Lower expression in testes. In laying hens, expressed higher in brain than in liver. In roosters, higher levels in liver than in brain.

The protein resides in the secreted. It carries out the reaction a sterol + a 1,2-diacyl-sn-glycero-3-phosphocholine = a sterol ester + a 1-acyl-sn-glycero-3-phosphocholine. Its activity is regulated as follows. APOA1 is the most potent activator in plasma. Also activated by APOE, APOC1 and APOA4. Functionally, central enzyme in the extracellular metabolism of plasma lipoproteins. Synthesized mainly in the liver and secreted into plasma where it converts cholesterol and phosphatidylcholines (lecithins) to cholesteryl esters and lysophosphatidylcholines on the surface of high and low density lipoproteins (HDLs and LDLs). The cholesterol ester is then transported back to the liver. Also produced in the brain by primary astrocytes, and esterifies free cholesterol on nascent APOE-containing lipoproteins secreted from glia and influences cerebral spinal fluid (CSF) APOE- and APOA1 levels. Together with APOE and the cholesterol transporter ABCA1, plays a key role in the maturation of glial-derived, nascent lipoproteins. Required for remodeling high-density lipoprotein particles into their spherical forms. Has a preference for plasma 16:0-18:2 or 18:O-18:2 phosphatidylcholines. The chain is Phosphatidylcholine-sterol acyltransferase (LCAT) from Gallus gallus (Chicken).